Reading from the N-terminus, the 335-residue chain is Thioredoxin-related transmembrane protein 4 (335 aa).

The first 20 residues, 1–20, serve as a signal peptide directing secretion; the sequence is MTGGFCVPVLLAAWLAAAAA. The Thioredoxin domain maps to 26–133; the sequence is AALPAEESRV…YEDLQNYILE (108 aa). Catalysis depends on nucleophile residues Cys60 and Cys63. Residues Cys60 and Cys63 are joined by a disulfide bond. The chain crosses the membrane as a helical span at residues 186–206; the sequence is VFFVIATLVFGLFMGLILVVI. The segment at 222-316 is disordered; the sequence is CEQEQSTGEA…EDGAHPADTQ (95 aa). A compositionally biased stretch (acidic residues) spans 238 to 280; the sequence is QDAEEEKDDSNEEENKDSLVDDEEEKEDIGDEDEGEEDEEEDN. Phosphoserine is present on residues Ser247 and Ser255. The segment covering 286–298 has biased composition (basic and acidic residues); sequence AEERSDTNERAVV.

It localises to the nucleus inner membrane. It is found in the endoplasmic reticulum membrane. The polypeptide is Thioredoxin-related transmembrane protein 4 (Tmx4) (Mus musculus (Mouse)).